Consider the following 520-residue polypeptide: Fumarate hydratase, mitochondrial (520 aa).

The N-terminal 39 residues, 1–39 (MASVAHISTAKAIFRAGGLPCRRLITPTLTGLPLKTHRM), are a transit peptide targeting the mitochondrion. Substrate contacts are provided by residues 153–155 (SGT), 184–187 (HPND), 194–196 (SSN), and Thr242. Residue His243 is the Proton donor/acceptor of the active site. Ser373 is a catalytic residue. Substrate contacts are provided by residues Ser374 and 379–381 (KVN).

The protein belongs to the class-II fumarase/aspartase family. Fumarase subfamily. In terms of assembly, homotetramer.

It is found in the mitochondrion matrix. It localises to the cytoplasm. The protein resides in the nucleus. The enzyme catalyses (S)-malate = fumarate + H2O. Its pathway is carbohydrate metabolism; tricarboxylic acid cycle; (S)-malate from fumarate: step 1/1. Catalyzes the reversible stereospecific interconversion of fumarate to L-malate. In mitochondrion, catalyzes the hydration of fumarate to L-malate in the tricarboxylic acid (TCA) cycle to facilitate a transition step in the production of energy in the form of NADH. In cytoplasm and nucleus, involved in DNA repair in response to DNA damage: following DNA double-strand breaks (DSBs), translocates from the cytosol to the nucleus and promotes DNA repair by catalyzing the dehydration of L-malate to fumarate. The protein is Fumarate hydratase, mitochondrial (fum1) of Schizosaccharomyces pombe (strain 972 / ATCC 24843) (Fission yeast).